Consider the following 205-residue polypeptide: Transmembrane emp24 domain-containing protein A (205 aa).

Residues 1 to 24 (MMNNKLLLLVIALLCIASNSIVES) form the signal peptide. The Lumenal portion of the chain corresponds to 25–172 (FSFKVSAKVE…RNTAESTNSR (148 aa)). The region spanning 34–116 (EECIYEEIGV…DKTVSFILSV (83 aa)) is the GOLD domain. A helical membrane pass occupies residues 173–193 (VLWWSVFEAFVLIALSIWQIY). Residues 194 to 205 (YLRRFFEVKRAV) lie on the Cytoplasmic side of the membrane.

This sequence belongs to the EMP24/GP25L family.

Its subcellular location is the cytoplasmic vesicle membrane. In terms of biological role, could have a role in the budding of coatomer-coated and other species of coated vesicles. The sequence is that of Transmembrane emp24 domain-containing protein A (empA) from Dictyostelium discoideum (Social amoeba).